Here is a 363-residue protein sequence, read N- to C-terminus: MTSEQTLLVLGIETTCDETAAAVVERRADGSGRILSNIVRSQIDEHAPFGGVVPEIAARAHVDLLDGIVANAMREAGTGFAQLSGVAAAAGPGLIGGVIVGLTTAKAIALVHNTPLIAVNHLEAHALTPRLTDATEFPYCLFLASGGHTQIVAVLGVGDYVRLGTTVDDAIGEAFDKIAKMLGLPYPGGPQVERAAASGDAARFAFPRPMLGRPDANFSLSGLKTAVRNEASRLTPLEPQDINDLCAGFQAAVLDSMADRLGAGLRLFRERFGAPKALVAAGGVAANQAIRRSLREVAAKAQTTLMVPPPALCTDNGAMIAWAGAERLALGLTDTMDAAPRARWLLDANATAPGKFANTRAGF.

Positions 121 and 125 each coordinate Fe cation. Substrate-binding positions include 143-147 (LASGG), aspartate 176, glycine 189, and asparagine 287. Aspartate 315 lines the Fe cation pocket.

This sequence belongs to the KAE1 / TsaD family. Requires Fe(2+) as cofactor.

The protein resides in the cytoplasm. It carries out the reaction L-threonylcarbamoyladenylate + adenosine(37) in tRNA = N(6)-L-threonylcarbamoyladenosine(37) in tRNA + AMP + H(+). In terms of biological role, required for the formation of a threonylcarbamoyl group on adenosine at position 37 (t(6)A37) in tRNAs that read codons beginning with adenine. Is involved in the transfer of the threonylcarbamoyl moiety of threonylcarbamoyl-AMP (TC-AMP) to the N6 group of A37, together with TsaE and TsaB. TsaD likely plays a direct catalytic role in this reaction. The sequence is that of tRNA N6-adenosine threonylcarbamoyltransferase from Rhodopseudomonas palustris (strain BisB5).